We begin with the raw amino-acid sequence, 416 residues long: Multifunctional CCA protein (416 aa).

ATP is bound by residues Gly8 and Arg11. CTP is bound by residues Gly8 and Arg11. The Mg(2+) site is built by Asp21 and Asp23. 3 residues coordinate ATP: Arg91, Arg137, and Arg140. The CTP site is built by Arg91, Arg137, and Arg140. Positions 228–329 constitute an HD domain; that stretch reads TGVHTLMVLA…VKIFDKADFW (102 aa).

This sequence belongs to the tRNA nucleotidyltransferase/poly(A) polymerase family. Bacterial CCA-adding enzyme type 1 subfamily. As to quaternary structure, monomer. Can also form homodimers and oligomers. Mg(2+) serves as cofactor. Ni(2+) is required as a cofactor.

It carries out the reaction a tRNA precursor + 2 CTP + ATP = a tRNA with a 3' CCA end + 3 diphosphate. The catalysed reaction is a tRNA with a 3' CCA end + 2 CTP + ATP = a tRNA with a 3' CCACCA end + 3 diphosphate. In terms of biological role, catalyzes the addition and repair of the essential 3'-terminal CCA sequence in tRNAs without using a nucleic acid template. Adds these three nucleotides in the order of C, C, and A to the tRNA nucleotide-73, using CTP and ATP as substrates and producing inorganic pyrophosphate. tRNA 3'-terminal CCA addition is required both for tRNA processing and repair. Also involved in tRNA surveillance by mediating tandem CCA addition to generate a CCACCA at the 3' terminus of unstable tRNAs. While stable tRNAs receive only 3'-terminal CCA, unstable tRNAs are marked with CCACCA and rapidly degraded. This Shewanella baltica (strain OS195) protein is Multifunctional CCA protein.